We begin with the raw amino-acid sequence, 916 residues long: Major intrinsically disordered Notch2-binding receptor 1 (916 aa).

At 1–891 (METSQETSLF…AEFRRAKVCK (891 aa)) the chain is on the cytoplasmic side. Disordered regions lie at residues 390-409 (EEKLHYPNASSQTPNFPAPE), 553-591 (KSDCDSSPEHNLTKIANGVPNSKGDKGNRPENTHHSEEE), 648-675 (SLTSEGPSDDSASPRMFHAHSGSHGPKL), 705-726 (TRPSSRSLTEENSATESKIASI), and 745-782 (NEEEIKDTGPGDNKDWHRKSKEADRQYDIPPQHRLPKQ). 2 stretches are compositionally biased toward basic and acidic residues: residues 553–564 (KSDCDSSPEHNL) and 575–591 (KGDKGNRPENTHHSEEE). Residue Ser711 is modified to Phosphoserine. The span at 750 to 771 (KDTGPGDNKDWHRKSKEADRQY) shows a compositional bias: basic and acidic residues. Residues 892–912 (IAALIAAAACTVILVIVVPIC) traverse the membrane as a helical segment. Over 913-916 (TMKS) the chain is Extracellular.

This sequence belongs to the MINAR family. In terms of assembly, interacts with NOTCH2; this interaction increases MINAR1 stability. Interacts (via N-terminus) with DEPTOR (via PDZ domain); this interaction may stabilize DEPTOR protein by impairing its ubiquitination. Widely expressed, including in breast epithelial cells and endothelial cells (at protein level). Expression is down-regulated in advanced breast tumors (at protein level).

The protein resides in the cell membrane. Functionally, intrinsically disordered protein which may negatively regulate mTOR signaling pathway by stabilizing the mTOR complex component DEPTOR. Negatively regulates angiogenesis. Negatively regulates cell growth. Negatively regulates neurite outgrowth in hippocampal neurons. The sequence is that of Major intrinsically disordered Notch2-binding receptor 1 from Homo sapiens (Human).